The chain runs to 103 residues: PTS system lactose-specific EIIA component (103 aa).

The PTS EIIA type-3 domain maps to 1 to 102 (MNREEVQLLG…MKHLLEFYKR (102 aa)). The active-site Tele-phosphohistidine intermediate is the H78. Residue H78 is modified to Phosphohistidine; by HPr. Residue D81 participates in Mg(2+) binding.

As to quaternary structure, homotrimer. The cofactor is Mg(2+).

Its subcellular location is the cytoplasm. In terms of biological role, the phosphoenolpyruvate-dependent sugar phosphotransferase system (sugar PTS), a major carbohydrate active transport system, catalyzes the phosphorylation of incoming sugar substrates concomitantly with their translocation across the cell membrane. The enzyme II LacEF PTS system is involved in lactose transport. This chain is PTS system lactose-specific EIIA component, found in Staphylococcus aureus (strain COL).